A 421-amino-acid polypeptide reads, in one-letter code: uncharacterized protein (421 aa).

This is an uncharacterized protein from Acanthamoeba polyphaga (Amoeba).